Consider the following 78-residue polypeptide: Large ribosomal subunit protein bL28 (78 aa).

Belongs to the bacterial ribosomal protein bL28 family.

This Glaesserella parasuis serovar 5 (strain SH0165) (Haemophilus parasuis) protein is Large ribosomal subunit protein bL28.